Reading from the N-terminus, the 620-residue chain is Glutathione-regulated potassium-efflux system protein KefC (620 aa).

The next 12 membrane-spanning stretches (helical) occupy residues 4-24, 26-46, 54-74, 90-110, 114-134, 149-169, 178-198, 218-238, 270-290, 294-314, 327-347, and 359-379; these read HTLVQALIYLGSAALIVPIAV, LGLGSVLGYLIAGCIIGLWGL, SILHFAEIGVVLMLFIIGLEL, GALQMVICGGLLGLFCMLLGL, VAELIGMTLALSSTAIAMQAM, FAVLLFQDIAAILLVAMIPLL, MGAFALSALKVAGALVLVVLL, VFSAVALFLVFGFGLLLEEVG, GLLLGLFFIGVGMSIDFGTLI, LRIVILLLGFLIIKIAMLWLI, WFAVLLGQGSEFAFVVFGAAQ, and SLTLAVALSMAATPILLVILN. The RCK N-terminal domain occupies 399 to 518; sequence QPRVIIAGFG…AGVEKPERET (120 aa). A disordered region spans residues 597–620; that stretch reads GWQGTEEGKHTGNMADEPETKPSS.

Belongs to the monovalent cation:proton antiporter 2 (CPA2) transporter (TC 2.A.37) family. KefC subfamily. In terms of assembly, homodimer. Interacts with the regulatory subunit KefF.

The protein localises to the cell inner membrane. In terms of biological role, pore-forming subunit of a potassium efflux system that confers protection against electrophiles. Catalyzes K(+)/H(+) antiport. The polypeptide is Glutathione-regulated potassium-efflux system protein KefC (Shigella flexneri serotype 5b (strain 8401)).